The primary structure comprises 131 residues: C-type natriuretic peptide (131 aa).

The first 20 residues, 1–20 (MMCKALVFAVLLLAVPLERA), serve as a signal peptide directing secretion. The propeptide occupies 21 to 109 (DSRALRTPVD…KRALPDRAKR (89 aa)). An intrachain disulfide couples Cys-115 to Cys-131.

This sequence belongs to the natriuretic peptide family. In terms of tissue distribution, highly expressed in brain and liver, and moderately in gut, gills and heart. Expressed to a low level in atrium, ventricle and liver of fresh water eels.

The protein localises to the secreted. Hormone which plays a role in endochondral ossification through regulation of cartilaginous growth plate chondrocytes proliferation and differentiation. May also be vasoactive and natriuretic. May be important for freshwater adaptation. This chain is C-type natriuretic peptide (cnp), found in Anguilla japonica (Japanese eel).